We begin with the raw amino-acid sequence, 339 residues long: Ketol-acid reductoisomerase (NADP(+)) (339 aa).

The region spanning M1–T182 is the KARI N-terminal Rossmann domain. NADP(+)-binding positions include Y24 to Q27, R48, S51, and D83 to Q86. H108 is an active-site residue. Residue G134 participates in NADP(+) binding. The region spanning T183–I328 is the KARI C-terminal knotted domain. Residues D191, E195, E227, and E231 each contribute to the Mg(2+) site. Residue S252 participates in substrate binding.

It belongs to the ketol-acid reductoisomerase family. The cofactor is Mg(2+).

The enzyme catalyses (2R)-2,3-dihydroxy-3-methylbutanoate + NADP(+) = (2S)-2-acetolactate + NADPH + H(+). It carries out the reaction (2R,3R)-2,3-dihydroxy-3-methylpentanoate + NADP(+) = (S)-2-ethyl-2-hydroxy-3-oxobutanoate + NADPH + H(+). Its pathway is amino-acid biosynthesis; L-isoleucine biosynthesis; L-isoleucine from 2-oxobutanoate: step 2/4. It participates in amino-acid biosynthesis; L-valine biosynthesis; L-valine from pyruvate: step 2/4. Functionally, involved in the biosynthesis of branched-chain amino acids (BCAA). Catalyzes an alkyl-migration followed by a ketol-acid reduction of (S)-2-acetolactate (S2AL) to yield (R)-2,3-dihydroxy-isovalerate. In the isomerase reaction, S2AL is rearranged via a Mg-dependent methyl migration to produce 3-hydroxy-3-methyl-2-ketobutyrate (HMKB). In the reductase reaction, this 2-ketoacid undergoes a metal-dependent reduction by NADPH to yield (R)-2,3-dihydroxy-isovalerate. The chain is Ketol-acid reductoisomerase (NADP(+)) from Acidiphilium cryptum (strain JF-5).